The chain runs to 304 residues: Acetaldehyde dehydrogenase 4 (304 aa).

Cys131 functions as the Acyl-thioester intermediate in the catalytic mechanism. NAD(+)-binding positions include 162–170 (SAGPGTRKN) and Asn273.

This sequence belongs to the acetaldehyde dehydrogenase family.

It catalyses the reaction acetaldehyde + NAD(+) + CoA = acetyl-CoA + NADH + H(+). The protein is Acetaldehyde dehydrogenase 4 of Dechloromonas aromatica (strain RCB).